Here is a 429-residue protein sequence, read N- to C-terminus: Probable imidazolonepropionase (429 aa).

The 4-imidazolone-5-propanoate site is built by Tyr161 and His194. Residue Tyr161 coordinates N-formimidoyl-L-glutamate. His262 contacts Fe(3+). His262 is a binding site for Zn(2+). A 4-imidazolone-5-propanoate-binding site is contributed by Glu265. A Fe(3+)-binding site is contributed by Asp336. Residue Asp336 coordinates Zn(2+). Asn338 is an N-formimidoyl-L-glutamate binding site.

Belongs to the metallo-dependent hydrolases superfamily. HutI family. The cofactor is Zn(2+). Requires Fe(3+) as cofactor.

It carries out the reaction 4-imidazolone-5-propanoate + H2O = N-formimidoyl-L-glutamate. Its pathway is amino-acid degradation; L-histidine degradation into L-glutamate; N-formimidoyl-L-glutamate from L-histidine: step 3/3. The sequence is that of Probable imidazolonepropionase (amdhd1) from Nematostella vectensis (Starlet sea anemone).